The sequence spans 158 residues: NADH-quinone oxidoreductase subunit B (158 aa).

[4Fe-4S] cluster contacts are provided by C37, C38, C102, and C132.

The protein belongs to the complex I 20 kDa subunit family. NDH-1 is composed of 14 different subunits. Subunits NuoB, C, D, E, F, and G constitute the peripheral sector of the complex. [4Fe-4S] cluster serves as cofactor.

The protein resides in the cell inner membrane. It catalyses the reaction a quinone + NADH + 5 H(+)(in) = a quinol + NAD(+) + 4 H(+)(out). Functionally, NDH-1 shuttles electrons from NADH, via FMN and iron-sulfur (Fe-S) centers, to quinones in the respiratory chain. Couples the redox reaction to proton translocation (for every two electrons transferred, four hydrogen ions are translocated across the cytoplasmic membrane), and thus conserves the redox energy in a proton gradient. The polypeptide is NADH-quinone oxidoreductase subunit B (Aromatoleum aromaticum (strain DSM 19018 / LMG 30748 / EbN1) (Azoarcus sp. (strain EbN1))).